A 1081-amino-acid chain; its full sequence is Zinc finger protein 827 (1081 aa).

Basic and acidic residues predominate over residues 1-10 (MPRRKQEQPK). The interval 1-14 (MPRRKQEQPKRLPS) is mediates direct interaction with RBBP4. Residues 1-77 (MPRRKQEQPK…DTSLGSTTPS (77 aa)) are disordered. Residues 3-5 (RRK) carry the RRK motif; mediates NuRD recruitment to telomeres motif. A compositionally biased stretch (polar residues) spans 62 to 77 (EQSTSPDTSLGSTTPS). Residues Lys-176, Lys-216, and Lys-226 each participate in a glycyl lysine isopeptide (Lys-Gly) (interchain with G-Cter in SUMO2) cross-link. Disordered stretches follow at residues 258 to 280 (KKVSERSLTPGQEHPPPASSFLS) and 305 to 348 (EKSS…SLEL). Over residues 327 to 344 (VSPPPPPPPPPPPPPPPQ) the composition is skewed to pro residues. Glycyl lysine isopeptide (Lys-Gly) (interchain with G-Cter in SUMO2) cross-links involve residues Lys-360 and Lys-372. 3 consecutive C2H2-type zinc fingers follow at residues 374-396 (FQCPICGLVIKRKSYWKRHMVIH), 402-424 (HQCPLCPFRCARKDNLKSHMKVH), and 433-455 (FQCQLCPFTSSRHFSLKLHMRCH). Residues Lys-466, Lys-475, Lys-523, Lys-549, Lys-580, Lys-587, and Lys-597 each participate in a glycyl lysine isopeptide (Lys-Gly) (interchain with G-Cter in SUMO2) cross-link. A disordered region spans residues 525–553 (EPKEDNGLPTSFTLNTADRPANHTKLKDP). The segment covering 616 to 627 (VFSPESEVSTPG) has biased composition (polar residues). The interval 616 to 640 (VFSPESEVSTPGVSEDALKPQEGKG) is disordered. Basic and acidic residues predominate over residues 631–640 (DALKPQEGKG). Glycyl lysine isopeptide (Lys-Gly) (interchain with G-Cter in SUMO2) cross-links involve residues Lys-634, Lys-639, and Lys-658. Residue Lys-673 forms a Glycyl lysine isopeptide (Lys-Gly) (interchain with G-Cter in SUMO1); alternate linkage. Lys-673 is covalently cross-linked (Glycyl lysine isopeptide (Lys-Gly) (interchain with G-Cter in SUMO2); alternate). Residues Lys-704, Lys-710, Lys-742, Lys-778, and Lys-798 each participate in a glycyl lysine isopeptide (Lys-Gly) (interchain with G-Cter in SUMO2) cross-link. C2H2-type zinc fingers lie at residues 817–839 (FPCDVCGKVFGRQQTLSRHLSLH) and 845–867 (YKCHLCPYAAKCRANLNQHLTVH). Residues Lys-870 and Lys-891 each participate in a glycyl lysine isopeptide (Lys-Gly) (interchain with G-Cter in SUMO2) cross-link. 2 consecutive C2H2-type zinc fingers follow at residues 897–919 (YSCHVCGFETELNVQFVSHMSLH) and 929–952 (ICCTACDFVTMEEAEIKTHIGTKH). Over residues 947–960 (HIGTKHTGEDRKTP) the composition is skewed to basic and acidic residues. The disordered stretch occupies residues 947–1013 (HIGTKHTGED…GSQPSLNSEE (67 aa)). Lys-958 is covalently cross-linked (Glycyl lysine isopeptide (Lys-Gly) (interchain with G-Cter in SUMO2)). The span at 961–978 (SESNSPSSSSLSALSDSA) shows a compositional bias: low complexity. Over residues 979–988 (NSKDDSDGSQ) the composition is skewed to basic and acidic residues. Lys-1014 is covalently cross-linked (Glycyl lysine isopeptide (Lys-Gly) (interchain with G-Cter in SUMO2)). C2H2-type zinc fingers lie at residues 1019–1041 (FECVFCNFVCKTKNMFERHLQIH) and 1047–1069 (FECDVCHKFMKTPEQLLEHKKCH).

It belongs to the krueppel C2H2-type zinc-finger protein family. Part of a transcription inhibitory ribonucleoprotein complex composed at least of the circular RNA circZNF827, HNRNPK and HNRNPL. Interacts with the nucleosome remodeling and histone deacetylase/NuRD complex. Interacts with RBBP4; the interaction is direct and recruits RBBP4, a component of the NuRD complex, to telomeres.

The protein localises to the nucleus. It localises to the chromosome. The protein resides in the telomere. As part of a ribonucleoprotein complex composed at least of HNRNPK, HNRNPL and the circular RNA circZNF827 that nucleates the complex on chromatin, may negatively regulate the transcription of genes involved in neuronal differentiation. Could also recruit the nucleosome remodeling and histone deacetylase/NuRD complex to telomeric regions of chromosomes to regulate chromatin remodeling as part of telomere maintenance. The sequence is that of Zinc finger protein 827 (ZNF827) from Macaca fascicularis (Crab-eating macaque).